The following is a 206-amino-acid chain: Inner membrane-spanning protein YciB (206 aa).

5 helical membrane-spanning segments follow: residues 22–42, 50–70, 76–96, 118–138, and 148–168; these read IYTA…LTYF, MQVI…FLHD, WKVT…HIMG, INWA…YVAF, and FKVF…GVYI. The span at 178–189 shows a compositional bias: basic and acidic residues; sequence LPKDKHQQRDQE. Residues 178–206 form a disordered region; the sequence is LPKDKHQQRDQETQNDTQQELSGKNTEEK. Polar residues predominate over residues 191-206; that stretch reads QNDTQQELSGKNTEEK.

Belongs to the YciB family.

Its subcellular location is the cell inner membrane. In terms of biological role, plays a role in cell envelope biogenesis, maintenance of cell envelope integrity and membrane homeostasis. The protein is Inner membrane-spanning protein YciB of Vibrio atlanticus (strain LGP32) (Vibrio splendidus (strain Mel32)).